The primary structure comprises 542 residues: Putative cysteine ligase BshC (542 aa).

Residues 458 to 487 are a coiled coil; the sequence is VAKNAAILQAQIEFLQHALERALLRKHETE.

This sequence belongs to the BshC family.

Functionally, involved in bacillithiol (BSH) biosynthesis. May catalyze the last step of the pathway, the addition of cysteine to glucosamine malate (GlcN-Mal) to generate BSH. In Geobacillus kaustophilus (strain HTA426), this protein is Putative cysteine ligase BshC.